The chain runs to 107 residues: Nucleoid-associated protein HNE_0371 (107 aa).

Belongs to the YbaB/EbfC family. In terms of assembly, homodimer.

The protein localises to the cytoplasm. It localises to the nucleoid. In terms of biological role, binds to DNA and alters its conformation. May be involved in regulation of gene expression, nucleoid organization and DNA protection. This is Nucleoid-associated protein HNE_0371 from Hyphomonas neptunium (strain ATCC 15444).